Consider the following 173-residue polypeptide: Crossover junction endodeoxyribonuclease RuvC (173 aa).

Catalysis depends on residues D8, E67, and D139. Mg(2+)-binding residues include D8, E67, and D139.

Belongs to the RuvC family. In terms of assembly, homodimer which binds Holliday junction (HJ) DNA. The HJ becomes 2-fold symmetrical on binding to RuvC with unstacked arms; it has a different conformation from HJ DNA in complex with RuvA. In the full resolvosome a probable DNA-RuvA(4)-RuvB(12)-RuvC(2) complex forms which resolves the HJ. Requires Mg(2+) as cofactor.

It localises to the cytoplasm. It catalyses the reaction Endonucleolytic cleavage at a junction such as a reciprocal single-stranded crossover between two homologous DNA duplexes (Holliday junction).. Its function is as follows. The RuvA-RuvB-RuvC complex processes Holliday junction (HJ) DNA during genetic recombination and DNA repair. Endonuclease that resolves HJ intermediates. Cleaves cruciform DNA by making single-stranded nicks across the HJ at symmetrical positions within the homologous arms, yielding a 5'-phosphate and a 3'-hydroxyl group; requires a central core of homology in the junction. The consensus cleavage sequence is 5'-(A/T)TT(C/G)-3'. Cleavage occurs on the 3'-side of the TT dinucleotide at the point of strand exchange. HJ branch migration catalyzed by RuvA-RuvB allows RuvC to scan DNA until it finds its consensus sequence, where it cleaves and resolves the cruciform DNA. The polypeptide is Crossover junction endodeoxyribonuclease RuvC (Shewanella woodyi (strain ATCC 51908 / MS32)).